A 485-amino-acid chain; its full sequence is MVEAVADIGLIGLAVMGQNLILNMNDHGFVVCAYNRTTSKVDDFLANEAKGTNVVGAHSVEELCAKLKRPRKVMLLVKAGSAVDAFIDQLLPHLEEGDIIIDGGNSHFPDSIRRTKELEAKGILFVGSGVSGGEEGARYGPSLMPGGNSKAWEHIQPIFQAIAAKAPDGASCCEWVGETGAGHYVKMVHNGIEYGDMQLITEVYQILHEGLGLSHDEMADIFEEWNKGDLDSFLIEITRDILRFKDTDGQPLVTKIRDTAGQKGTGKWTAIDSLDRGIPVTLIGEAVYSRCLSSLKDERVRASKILQGPSSSKFTGDKKTFIAQLGQALYAAKIVSYAQGYMLMRQAAKDYEWKLNNAGIALMWRGGCIIRSVFLGKIRDAYTKNPELENLLFDDFFKDATAKAQDAWRNVTAQAVLMGIPTPALSTALNFYDGLRHEILPANLLQAQRDYFGAHTYELLHTPGKWVHTNWTGRGGNVSASTYDA.

Residues 12–17, 35–37, 77–79, and Asn105 each bind NADP(+); these read GLAVMG, NRT, and VKA. Substrate is bound by residues Asn105 and 131 to 133; that span reads SGG. Lys186 functions as the Proton acceptor in the catalytic mechanism. 189–190 contacts substrate; it reads HN. Glu193 serves as the catalytic Proton donor. Substrate is bound by residues Tyr194, Lys263, Arg290, Arg449, and His455.

Belongs to the 6-phosphogluconate dehydrogenase family. In terms of assembly, homodimer.

The enzyme catalyses 6-phospho-D-gluconate + NADP(+) = D-ribulose 5-phosphate + CO2 + NADPH. Its pathway is carbohydrate degradation; pentose phosphate pathway; D-ribulose 5-phosphate from D-glucose 6-phosphate (oxidative stage): step 3/3. Catalyzes the oxidative decarboxylation of 6-phosphogluconate to ribulose 5-phosphate and CO(2), with concomitant reduction of NADP to NADPH. This is 6-phosphogluconate dehydrogenase, decarboxylating (6-PGD) from Cunninghamella elegans.